The following is a 42-amino-acid chain: Packaging protein P20 (42 aa).

A helical transmembrane segment spans residues 11–31; the sequence is INWLIVILMLTIAGMAATLVC.

As to quaternary structure, heterodimer of P20 and P22; further multimerizes as hexamers of heterodimers. Part of the dodecameric portal complex that is composed of the packaging efficiency factor P6, the DNA packaging ATPase P9, and the internal heterododecamer P20/P22 which spans the virion inner membrane.

The protein localises to the virion membrane. In terms of biological role, together with P22, forms the internal part of the portal complex embeded in the virion internal membrane and which plays critical roles in genome packaging and genome ejection. Both proteins multimerize as a single ring-shaped heterdodecamer arranged around a central channel and interact with the P6/P9 external part of the portal. This is Packaging protein P20 (XX) from Acinetobacter calcoaceticus (Arthrobacter siderocapsulatus).